The primary structure comprises 482 residues: Glycogen synthase (482 aa).

An ADP-alpha-D-glucose-binding site is contributed by Lys15.

It belongs to the glycosyltransferase 1 family. Bacterial/plant glycogen synthase subfamily.

It carries out the reaction [(1-&gt;4)-alpha-D-glucosyl](n) + ADP-alpha-D-glucose = [(1-&gt;4)-alpha-D-glucosyl](n+1) + ADP + H(+). Its pathway is glycan biosynthesis; glycogen biosynthesis. Functionally, synthesizes alpha-1,4-glucan chains using ADP-glucose. The chain is Glycogen synthase from Elusimicrobium minutum (strain Pei191).